A 68-amino-acid chain; its full sequence is Small ribosomal subunit protein eS17 (68 aa).

It belongs to the eukaryotic ribosomal protein eS17 family.

The polypeptide is Small ribosomal subunit protein eS17 (Staphylothermus marinus (strain ATCC 43588 / DSM 3639 / JCM 9404 / F1)).